The following is a 621-amino-acid chain: Elongation factor 4 (621 aa).

In terms of domain architecture, tr-type G spans 21–203 (DLIRNICIIA…AIVKRVPPPK (183 aa)). GTP is bound by residues 33–38 (DHGKTT) and 150–153 (NKID).

It belongs to the TRAFAC class translation factor GTPase superfamily. Classic translation factor GTPase family. LepA subfamily.

The protein localises to the cell inner membrane. It carries out the reaction GTP + H2O = GDP + phosphate + H(+). In terms of biological role, required for accurate and efficient protein synthesis under certain stress conditions. May act as a fidelity factor of the translation reaction, by catalyzing a one-codon backward translocation of tRNAs on improperly translocated ribosomes. Back-translocation proceeds from a post-translocation (POST) complex to a pre-translocation (PRE) complex, thus giving elongation factor G a second chance to translocate the tRNAs correctly. Binds to ribosomes in a GTP-dependent manner. The polypeptide is Elongation factor 4 (Thermotoga maritima (strain ATCC 43589 / DSM 3109 / JCM 10099 / NBRC 100826 / MSB8)).